Here is a 206-residue protein sequence, read N- to C-terminus: Glycerol-3-phosphate acyltransferase (206 aa).

6 consecutive transmembrane segments (helical) span residues 4–24 (TAFA…AVIV), 53–73 (LAAA…VALA), 86–106 (GIAL…FFGF), 116–136 (VGIL…TWLF), 137–157 (MAFV…LAPV), and 160–180 (FFIL…AIVV).

It belongs to the PlsY family. In terms of assembly, probably interacts with PlsX.

It localises to the cell inner membrane. The catalysed reaction is an acyl phosphate + sn-glycerol 3-phosphate = a 1-acyl-sn-glycero-3-phosphate + phosphate. It functions in the pathway lipid metabolism; phospholipid metabolism. Catalyzes the transfer of an acyl group from acyl-phosphate (acyl-PO(4)) to glycerol-3-phosphate (G3P) to form lysophosphatidic acid (LPA). This enzyme utilizes acyl-phosphate as fatty acyl donor, but not acyl-CoA or acyl-ACP. This Chromobacterium violaceum (strain ATCC 12472 / DSM 30191 / JCM 1249 / CCUG 213 / NBRC 12614 / NCIMB 9131 / NCTC 9757 / MK) protein is Glycerol-3-phosphate acyltransferase.